A 133-amino-acid polypeptide reads, in one-letter code: Small ribosomal subunit protein uS19 (133 aa).

The protein belongs to the universal ribosomal protein uS19 family.

Functionally, protein S19 forms a complex with S13 that binds strongly to the 16S ribosomal RNA. The protein is Small ribosomal subunit protein uS19 of Thermococcus sibiricus (strain DSM 12597 / MM 739).